The primary structure comprises 477 residues: Ribulose bisphosphate carboxylase large chain (477 aa).

Positions 1-2 are excised as a propeptide; sequence MS. N-acetylproline is present on proline 3. Substrate-binding residues include asparagine 123 and threonine 173. Lysine 175 (proton acceptor) is an active-site residue. Lysine 177 contributes to the substrate binding site. Mg(2+) is bound by residues lysine 201, aspartate 203, and glutamate 204. Residue lysine 201 is modified to N6-carboxylysine. The active-site Proton acceptor is the histidine 294. Substrate-binding residues include arginine 295, histidine 327, and serine 379.

It belongs to the RuBisCO large chain family. Type I subfamily. In terms of assembly, heterohexadecamer of 8 large chains and 8 small chains; disulfide-linked. The disulfide link is formed within the large subunit homodimers. Requires Mg(2+) as cofactor. Post-translationally, the disulfide bond which can form in the large chain dimeric partners within the hexadecamer appears to be associated with oxidative stress and protein turnover.

The protein localises to the plastid. The protein resides in the chloroplast. The enzyme catalyses 2 (2R)-3-phosphoglycerate + 2 H(+) = D-ribulose 1,5-bisphosphate + CO2 + H2O. It catalyses the reaction D-ribulose 1,5-bisphosphate + O2 = 2-phosphoglycolate + (2R)-3-phosphoglycerate + 2 H(+). Its function is as follows. RuBisCO catalyzes two reactions: the carboxylation of D-ribulose 1,5-bisphosphate, the primary event in carbon dioxide fixation, as well as the oxidative fragmentation of the pentose substrate in the photorespiration process. Both reactions occur simultaneously and in competition at the same active site. This Avena sativa (Oat) protein is Ribulose bisphosphate carboxylase large chain.